The primary structure comprises 419 residues: Peptide chain release factor subunit 1 (419 aa).

It belongs to the eukaryotic release factor 1 family. In terms of assembly, heterodimer of two subunits, one of which binds GTP.

The protein localises to the cytoplasm. In terms of biological role, directs the termination of nascent peptide synthesis (translation) in response to the termination codons UAA, UAG and UGA. This chain is Peptide chain release factor subunit 1, found in Methanococcus maripaludis (strain DSM 14266 / JCM 13030 / NBRC 101832 / S2 / LL).